The following is a 1384-amino-acid chain: ABC transporter C family member 2 (1384 aa).

Residues 104–388 (NKISVATKIF…LPEAIHRALS (285 aa)) form the ABC transmembrane type-1 1 domain. The next 5 membrane-spanning stretches (helical) occupy residues 112-132 (IFVA…IYYI), 140-160 (TFKF…SLTL), 226-246 (IFVF…IVGL), 247-267 (SGLV…FLST), and 333-353 (MITQ…YALT). An ABC transporter 1 domain is found at 505–724 (IEYDGAVQPS…GIDFESIMKT (220 aa)). Residue 537-544 (GIVGSGKT) coordinates ATP. Residues 729-756 (IDENDQSSTSTTDKKSSTSSSSSELKKS) form a disordered region. The segment covering 735-756 (SSTSTTDKKSSTSSSSSELKKS) has biased composition (low complexity). The next 5 helical transmembrane spans lie at 813 to 833 (LFFL…LSDF), 852 to 872 (ILYY…RYFM), 941 to 961 (LFMM…LVVV), 1036 to 1056 (GIRL…SSLF), and 1061 to 1081 (GFSV…NWTI). The region spanning 814–1093 (FFLTCALYFI…MTELEVKMNS (280 aa)) is the ABC transmembrane type-1 2 domain. Residues 1137–1371 (VEFKNVEIKY…EGSRFKKLVK (235 aa)) enclose the ABC transporter 2 domain. 1171–1178 (GRTGAGKS) is an ATP binding site.

The protein belongs to the ABC transporter superfamily. ABCC family. Conjugate transporter (TC 3.A.1.208) subfamily.

It localises to the membrane. The sequence is that of ABC transporter C family member 2 (abcC2) from Dictyostelium discoideum (Social amoeba).